The primary structure comprises 431 residues: O-methyltransferase gliM (431 aa).

The stretch at 20 to 85 forms a coiled coil; the sequence is EFKAIVNDLR…SMDKLQLQLV (66 aa). Residues Asp287 and 319-321 each bind S-adenosyl-L-methionine; that span reads GDF. Catalysis depends on His338, which acts as the Proton acceptor.

Belongs to the class I-like SAM-binding methyltransferase superfamily. Cation-independent O-methyltransferase family. COMT subfamily.

The protein operates within mycotoxin biosynthesis. Functionally, O-methyltransferase; part of the gene cluster that mediates the biosynthesis of gliotoxin, a member of the epipolythiodioxopiperazine (ETP) class of toxins characterized by a disulfide bridged cyclic dipeptide. The first step in gliotoxin biosynthesis is the condensation of serine and phenylalanine to form the cyclo-L-phenylalanyl-L-serine diketopiperazine (DKP) by the NRPS gliP. GliP is also able to produce the DKP cyclo-L-tryptophanyl-L-serine, suggesting that the substrate specificity of the first adenylation (A) domain in gliP is sufficiently relaxed to accommodate both L-Phe and L-Trp. The cytochrome P450 monooxygenase gliC has been shown to catalyze the subsequent hydroxylation of the alpha-carbon of L-Phe in cyclo-L-phenylalanyl-L-serine whereas the second cytochrome P450 enzyme, gliF, is presumably involved in the modification of the DKP side chain. The glutathione S-transferase (GST) gliG then forms a bis-glutathionylated biosynthetic intermediate which is responsible for the sulfurization of gliotoxin. This bis-glutathionylated intermediate is subsequently processed by the gamma-glutamyl cyclotransferase gliK to remove both gamma-glutamyl moieties. Subsequent processing via gliI yields a biosynthetic intermediate, which is N-methylated via the N-methyltransferase gliN, before the gliotoxin oxidoreductase gliT-mediated disulfide bridge closure. GliN-mediated amide methylation confers stability to ETP, damping the spontaneous formation of tri- and tetrasulfides. Intracellular dithiol gliotoxin oxidized by gliT is subsequently effluxed by gliA. Gliotoxin contributes to pathogenesis during invasive aspergillosis. In macrophages and neutrophils, gliotoxin showed inhibition of various different cell functions including cytokine production, antigen presentation, phagocytosis, and production of reactive oxygen species. In Aspergillus fumigatus (strain ATCC MYA-4609 / CBS 101355 / FGSC A1100 / Af293) (Neosartorya fumigata), this protein is O-methyltransferase gliM.